The primary structure comprises 166 residues: Transcriptional repressor NrdR (166 aa).

A zinc finger spans residues 3-34; that stretch reads CPFCGFSDSRVLDSRPTVEGNSIRRRRECCGC. Positions 49–139 constitute an ATP-cone domain; sequence LIVVKKDGRR…VYREFRDAES (91 aa).

This sequence belongs to the NrdR family. Zn(2+) is required as a cofactor.

Negatively regulates transcription of bacterial ribonucleotide reductase nrd genes and operons by binding to NrdR-boxes. The sequence is that of Transcriptional repressor NrdR from Pelotomaculum thermopropionicum (strain DSM 13744 / JCM 10971 / SI).